Here is a 583-residue protein sequence, read N- to C-terminus: Propane 2-monooxygenase operon transcriptional activator MimR (583 aa).

The Sigma-54 factor interaction domain occupies 320–513 (LAGRSSSFRR…LRHVLTETLR (194 aa)). Residues 348–355 (GEKGSGRT) and 395–404 (DADFAVIVAD) contribute to the ATP site.

Functionally, acts as a transcriptional activator of the mimABCD operon encoding the propane 2-monooxygenase complex. The protein is Propane 2-monooxygenase operon transcriptional activator MimR of Mycolicibacterium goodii (Mycobacterium goodii).